The primary structure comprises 247 residues: tRNA pseudouridine synthase A (247 aa).

Catalysis depends on Asp52, which acts as the Nucleophile. Tyr111 is a binding site for substrate.

Belongs to the tRNA pseudouridine synthase TruA family. Homodimer.

It catalyses the reaction uridine(38/39/40) in tRNA = pseudouridine(38/39/40) in tRNA. In terms of biological role, formation of pseudouridine at positions 38, 39 and 40 in the anticodon stem and loop of transfer RNAs. The sequence is that of tRNA pseudouridine synthase A from Caulobacter vibrioides (strain ATCC 19089 / CIP 103742 / CB 15) (Caulobacter crescentus).